Reading from the N-terminus, the 788-residue chain is Ciliated left-right organizer metallopeptidase (788 aa).

Positions Met-1 to Ala-20 are cleaved as a signal peptide. The Extracellular segment spans residues Ser-21–Arg-735. Low complexity predominate over residues Ser-40–Ser-56. Residues Ser-40 to Pro-59 form a disordered region. A Zn(2+)-binding site is contributed by His-305. The active site involves Glu-306. His-309 lines the Zn(2+) pocket. N-linked (GlcNAc...) asparagine glycosylation is present at Asn-333. His-385 is a Zn(2+) binding site. N-linked (GlcNAc...) asparagine glycans are attached at residues Asn-425, Asn-491, Asn-524, and Asn-713. Residues Leu-736–Tyr-756 traverse the membrane as a helical segment. At Gln-757–Val-788 the chain is on the cytoplasmic side. The disordered stretch occupies residues Ser-767–Val-788.

It belongs to the peptidase M8 family. Zn(2+) is required as a cofactor.

The protein localises to the membrane. Functionally, putative metalloproteinase that plays a role in left-right patterning process. The polypeptide is Ciliated left-right organizer metallopeptidase (Homo sapiens (Human)).